Consider the following 80-residue polypeptide: UPF0270 protein VFMJ11_0205 (80 aa).

The protein belongs to the UPF0270 family.

The sequence is that of UPF0270 protein VFMJ11_0205 from Aliivibrio fischeri (strain MJ11) (Vibrio fischeri).